Here is an 830-residue protein sequence, read N- to C-terminus: Ribosome biogenesis protein ERB1 (830 aa).

The segment at 1 to 142 is disordered; that stretch reads MAPQPLKVGT…NKDLPVDEKL (142 aa). 2 stretches are compositionally biased toward acidic residues: residues 35-44 and 52-109; these read VSEESDEEFG and MSDD…DSDS. Over residues 131–142 the composition is skewed to basic and acidic residues; the sequence is EENKDLPVDEKL. WD repeat units follow at residues 481–520, 523–563, 660–698, 701–740, 744–783, and 799–830; these read PGDTRVRSVSTSPDGQWIASGSEDGVVRVWDLGNGREVWR, LHAG…APHI, KTPGTIQRVAFHPSKPHFFAATQRYIRLYDLAAQKLIRT, SGVKWISSMDVHSGGDNLIIGSYDKKLAWFDMDLSAKPYK, YHNRALRSVAYHPTLPLFASASDDGTVHIFHCTVYTDLMQ, and IDGIGVLDLRWVPGKPWLVSSGADGEVRLWCS.

Belongs to the WD repeat BOP1/ERB1 family. As to quaternary structure, component of the NOP7 complex, composed of ERB1, NOP7 and YTM1. The complex is held together by ERB1, which interacts with NOP7 via its N-terminal domain and with YTM1 via a high-affinity interaction between the seven-bladed beta-propeller domains of the 2 proteins. The NOP7 complex associates with the 66S pre-ribosome.

The protein localises to the nucleus. It is found in the nucleolus. Its subcellular location is the nucleoplasm. Component of the NOP7 complex, which is required for maturation of the 25S and 5.8S ribosomal RNAs and formation of the 60S ribosome. This is Ribosome biogenesis protein ERB1 from Cryptococcus neoformans var. neoformans serotype D (strain JEC21 / ATCC MYA-565) (Filobasidiella neoformans).